Reading from the N-terminus, the 249-residue chain is Uridylate kinase (249 aa).

21-24 lines the ATP pocket; the sequence is KLSG. Gly63 is a binding site for UMP. Residues Gly64 and Arg68 each contribute to the ATP site. Residues Asp84 and 145 to 152 each bind UMP; that span reads TGNPFVTT. Positions 172, 178, and 181 each coordinate ATP.

The protein belongs to the UMP kinase family. In terms of assembly, homohexamer.

It localises to the cytoplasm. The enzyme catalyses UMP + ATP = UDP + ADP. The protein operates within pyrimidine metabolism; CTP biosynthesis via de novo pathway; UDP from UMP (UMPK route): step 1/1. Inhibited by UTP. Its function is as follows. Catalyzes the reversible phosphorylation of UMP to UDP. The chain is Uridylate kinase from Francisella tularensis subsp. holarctica (strain FTNF002-00 / FTA).